A 563-amino-acid chain; its full sequence is Inclusion membrane protein M (563 aa).

At 1-36 (MVYFRAHQPRHTPKTFPLEVHHSFSDKHPQIAKAMR) the chain is on the cytoplasmic side. A helical transmembrane segment spans residues 37 to 57 (ITGIALAALSLLAVVACVIAV). A topological domain (vacuolar) is located at residue serine 58. Residues 59–79 (AGGAAIPLAVISGIAVMSGLL) form a helical membrane-spanning segment. Over 80 to 252 (SAATIICSAK…VLKVALSLGV (173 aa)) the chain is Cytoplasmic. Residues 253 to 273 (LAGVAALIIFLPPSLPFIAVI) traverse the membrane as a helical segment. Residue glycine 274 is a topological domain, vacuolar. The helical transmembrane segment at 275 to 295 (VSSLALGMASFLMIRGIKYLL) threads the bilayer. The Cytoplasmic portion of the chain corresponds to 296-563 (EHSPLNRKQL…QLAQYLLDNH (268 aa)).

The protein belongs to the chlamydial CPn_0065/CT_288/TC_0561 family. As to quaternary structure, interacts with host CCDC146. In host cells infected with C.trachomatis incM, CCDC146 is recruited to the periphery of the pathogen-containing vacuole but recruitment is not dependent on incM.

Its subcellular location is the host vacuole. It is found in the host pathogen-containing vacuole. The protein resides in the host pathogen-containing vacuole membrane. The protein localises to the host pathogen-containing vacuole lumen. It localises to the secreted. Functionally, interferes with host cell cytokinesis, centrosome positioning and Golgi distribution, and contributes to the morphology and stability of the pathogen-containing vacuole. May exert its effects by acting directly or indirectly on host microtubules. The sequence is that of Inclusion membrane protein M from Chlamydia trachomatis serovar D (strain ATCC VR-885 / DSM 19411 / UW-3/Cx).